Consider the following 398-residue polypeptide: MNIHEYQGKEILASYGVRIQRGIVANNPVEAVAAAKQLTTETGTSWYVVKAQVHAGGRGKGGGVKLAKNLQQVEEISEQIIGMQLITPQTSAEGKKVHKVLIAEDVYYPGESETSEFYISVLLNRSTGRNMIVYSTEGGMDIEEVAAHTPHLIHNEEIDPSVGLQAFQARRIAFNLGLSGNAFKEMVKFIDSLYNAYIGSDASMFEINPVLKTSDDKIMAVDAKVNIDDNALYRQPKYADMRDIREENPIEVEAKEVGLNYVDLDGTVGCMVNGAGLAMATMDLIKYAGFEPANFLDVGGTADAKRVETAFRIILKDENVKAILINIFGGIVRCDRVAQGVVDAYKNMGDAIKVPIIVRLQGTNAEIAKELIDNSGMPILSAVQFQEAADQVKAALSK.

Residues 9–253 (KEILASYGVR…IREENPIEVE (245 aa)) enclose the ATP-grasp domain. Residues Lys-50, 57-59 (GRG), Val-106, and Glu-116 each bind ATP. Residues Asn-208 and Asp-222 each contribute to the Mg(2+) site. Substrate-binding positions include Asn-273 and 330–332 (GIV).

Belongs to the succinate/malate CoA ligase beta subunit family. As to quaternary structure, heterotetramer of two alpha and two beta subunits. The cofactor is Mg(2+).

The enzyme catalyses succinate + ATP + CoA = succinyl-CoA + ADP + phosphate. It catalyses the reaction GTP + succinate + CoA = succinyl-CoA + GDP + phosphate. It participates in carbohydrate metabolism; tricarboxylic acid cycle; succinate from succinyl-CoA (ligase route): step 1/1. Succinyl-CoA synthetase functions in the citric acid cycle (TCA), coupling the hydrolysis of succinyl-CoA to the synthesis of either ATP or GTP and thus represents the only step of substrate-level phosphorylation in the TCA. The beta subunit provides nucleotide specificity of the enzyme and binds the substrate succinate, while the binding sites for coenzyme A and phosphate are found in the alpha subunit. This chain is Succinate--CoA ligase [ADP-forming] subunit beta, found in Flavobacterium psychrophilum (strain ATCC 49511 / DSM 21280 / CIP 103535 / JIP02/86).